The following is a 56-amino-acid chain: Serine protease inhibitor Kazal-type 1 (56 aa).

Residues 3–56 form the Kazal-like domain; that stretch reads LGREAKCNNNAGGCTKIYNPVCGTDGNTYPNECMLCVENQKRQMPVLIQRSGPC. 3 disulfide bridges follow: cysteine 9-cysteine 38, cysteine 16-cysteine 35, and cysteine 24-cysteine 56.

The protein resides in the secreted. Functionally, serine protease inhibitor which exhibits anti-trypsin activity. In the pancreas, protects against trypsin-catalyzed premature activation of zymogens. Its function is as follows. In the male reproductive tract, binds to sperm heads where it modulates sperm capacitance by inhibiting calcium uptake and nitrogen oxide (NO) production. This is Serine protease inhibitor Kazal-type 1 (SPINK1) from Equus caballus (Horse).